The sequence spans 319 residues: Histone-lysine N-methyltransferase set5 (319 aa).

An SET domain is found at 4 to 141 (YETEIYKVVP…AGEEILTTYI (138 aa)). Ser-316 bears the Phosphoserine mark. A Phosphothreonine modification is found at Thr-318.

This sequence belongs to the class V-like SAM-binding methyltransferase superfamily.

Its subcellular location is the nucleus. The protein resides in the chromosome. The protein localises to the cytoplasm. It catalyses the reaction L-lysyl-[histone] + S-adenosyl-L-methionine = N(6)-methyl-L-lysyl-[histone] + S-adenosyl-L-homocysteine + H(+). Its function is as follows. Histone methyltransferase that monomethylates 'Lys-5', 'Lys-8' and 'Lys-12' of histone H4 (H4K5me1, H4K8me1 and H4K12me1, respectively), thereby controlling gene expression and remodeling chromatin structures. Monomethylation of 'Lys-5' of histone H4 (H4K5me1) is required for subsequent acetylation and formation of N6-acetyl-N6-methyllysine (H4K5acme). The polypeptide is Histone-lysine N-methyltransferase set5 (set5) (Schizosaccharomyces pombe (strain 972 / ATCC 24843) (Fission yeast)).